Consider the following 425-residue polypeptide: UDP-sugar transporter protein SLC35A5 (425 aa).

At 1–7 the chain is on the cytoplasmic side; it reads MESNCGH. The helical transmembrane segment at 8–28 threads the bilayer; the sequence is PMLSVSSAMYTFLLGAIFITL. At 29 to 52 the chain is on the lumenal side; sequence SSSRILLVKYSANEENKYDYLPTT. The helical transmembrane segment at 53-73 threads the bilayer; it reads VNVCSELVKLVFCALVSFWVL. Residues 74–92 lie on the Cytoplasmic side of the membrane; that stretch reads KKEDHQNRKLRCGSWKEFF. Residues 93-115 form a helical membrane-spanning segment; sequence NFMKWSIPAFLYFLDNLIVFYVL. Residues 116–119 are Lumenal-facing; it reads SYLQ. Residues 120–142 form a helical membrane-spanning segment; it reads PAMAVIFSNFSIITTALLFRIVL. Over 143 to 147 the chain is Cytoplasmic; the sequence is KRHLN. Residues 148–168 traverse the membrane as a helical segment; it reads GIQWASLLILFLSIVALTSGT. At 169–228 the chain is on the lumenal side; that stretch reads ETSQHSLAGHGFHHDALFSPSNSCLLFRSECPRKDNCTAKEWTFSEAQWNTTARVFSHIR. N-linked (GlcNAc...) asparagine glycans are attached at residues Asn-204 and Asn-218. The helical transmembrane segment at 229–249 threads the bilayer; the sequence is LGLGHVLIIVQCFISSMANIY. Residues 250–263 lie on the Cytoplasmic side of the membrane; that stretch reads NEKILKEGNQLTES. A helical membrane pass occupies residues 264–284; sequence IFVQNSKLYFFGVLFNGLTLG. The Lumenal segment spans residues 285-303; the sequence is LQSGNRDQIKNCGIFYGHN. The helical transmembrane segment at 304 to 324 threads the bilayer; that stretch reads AFSVALIFVTAFQGLSVAFIL. Over 325–330 the chain is Cytoplasmic; the sequence is KFLDNM. Residues 331 to 351 form a helical membrane-spanning segment; sequence FHVLMAQVTTVVITTVSVLVF. The Lumenal segment spans residues 352-354; it reads DFR. The chain crosses the membrane as a helical span at residues 355–375; the sequence is PSLEFFLEAPSVLLSILIYNA. The Cytoplasmic segment spans residues 376–425; it reads SNPQGVENVPRKERIRDLSGTLWERSSGDGEELERLTKPKSDIESDEDTF. Phosphoserine is present on residues Ser-394, Ser-416, and Ser-420. Positions 398-425 are disordered; that stretch reads WERSSGDGEELERLTKPKSDIESDEDTF. Residues 408 to 418 show a composition bias toward basic and acidic residues; sequence LERLTKPKSDI.

Belongs to the nucleotide-sugar transporter family. SLC35A subfamily. Probably forms homooligomers and heterooligomers with SLC35A1, SLC35A2, SLC35A3 and SLC35A4.

Its subcellular location is the golgi apparatus membrane. It carries out the reaction UMP(out) + UDP-alpha-D-glucuronate(in) = UMP(in) + UDP-alpha-D-glucuronate(out). The catalysed reaction is UMP(out) + UDP-N-acetyl-alpha-D-glucosamine(in) = UMP(in) + UDP-N-acetyl-alpha-D-glucosamine(out). It catalyses the reaction UDP-N-acetyl-alpha-D-galactosamine(in) + UMP(out) = UDP-N-acetyl-alpha-D-galactosamine(out) + UMP(in). In terms of biological role, probable UDP-sugar:UMP transmembrane antiporter involved in UDP-alpha-D-glucuronate/UDP-GlcA, UDP-GlcNAc/UDP-N-acetyl-alpha-D-glucosamine and UDP-N-acetyl-alpha-D-galactosamine/UDP-GalNAc transport from the cytosol to the lumen of the Golgi. In Bos taurus (Bovine), this protein is UDP-sugar transporter protein SLC35A5.